A 130-amino-acid chain; its full sequence is Small ribosomal subunit protein uS11c (130 aa).

The protein belongs to the universal ribosomal protein uS11 family. In terms of assembly, part of the 30S ribosomal subunit.

It is found in the plastid. The protein localises to the chloroplast. In Zygnema circumcarinatum (Green alga), this protein is Small ribosomal subunit protein uS11c.